Here is a 439-residue protein sequence, read N- to C-terminus: N5-carboxyaminoimidazole ribonucleotide synthase (439 aa).

ATP contacts are provided by residues Lys113, Lys160, 197-200 (EERV), Glu205, and 283-284 (NE). Residues 117-313 (RRRLAALGAA…QFEQHLRAVL (197 aa)) enclose the ATP-grasp domain.

The protein belongs to the PurK/PurT family. As to quaternary structure, homodimer.

The enzyme catalyses 5-amino-1-(5-phospho-beta-D-ribosyl)imidazole + hydrogencarbonate + ATP = 5-carboxyamino-1-(5-phospho-D-ribosyl)imidazole + ADP + phosphate + 2 H(+). Its pathway is purine metabolism; IMP biosynthesis via de novo pathway; 5-amino-1-(5-phospho-D-ribosyl)imidazole-4-carboxylate from 5-amino-1-(5-phospho-D-ribosyl)imidazole (N5-CAIR route): step 1/2. In terms of biological role, catalyzes the ATP-dependent conversion of 5-aminoimidazole ribonucleotide (AIR) and HCO(3)(-) to N5-carboxyaminoimidazole ribonucleotide (N5-CAIR). The chain is N5-carboxyaminoimidazole ribonucleotide synthase from Mycobacterium leprae (strain TN).